We begin with the raw amino-acid sequence, 82 residues long: RNA-binding protein Hfq (82 aa).

Positions 11–71 constitute a Sm domain; the sequence is DTFLNSVRKS…ISTIMPAQPV (61 aa).

This sequence belongs to the Hfq family. As to quaternary structure, homohexamer.

Its function is as follows. RNA chaperone that binds small regulatory RNA (sRNAs) and mRNAs to facilitate mRNA translational regulation in response to envelope stress, environmental stress and changes in metabolite concentrations. Also binds with high specificity to tRNAs. This chain is RNA-binding protein Hfq, found in Caulobacter sp. (strain K31).